A 535-amino-acid polypeptide reads, in one-letter code: Peptide chain release factor 3 (535 aa).

The tr-type G domain maps to 8-276; it reads ARRRTFAIIS…ALVEQAPPPG (269 aa). GTP-binding positions include 17-24, 85-89, and 139-142; these read SHPDAGKT, DTPGH, and NKMD.

This sequence belongs to the TRAFAC class translation factor GTPase superfamily. Classic translation factor GTPase family. PrfC subfamily.

It localises to the cytoplasm. Increases the formation of ribosomal termination complexes and stimulates activities of RF-1 and RF-2. It binds guanine nucleotides and has strong preference for UGA stop codons. It may interact directly with the ribosome. The stimulation of RF-1 and RF-2 is significantly reduced by GTP and GDP, but not by GMP. The sequence is that of Peptide chain release factor 3 from Bordetella petrii (strain ATCC BAA-461 / DSM 12804 / CCUG 43448).